Reading from the N-terminus, the 675-residue chain is Protein kintoun (675 aa).

Disordered stretches follow at residues 98–131 (ASKK…KQGA), 265–293 (AGEG…TAPP), 310–340 (EGGA…AVAK), and 509–659 (EAAH…AAPT). Basic and acidic residues predominate over residues 102 to 113 (QQQEQEKQEKEQ). Residues 279–293 (VPGVPDLPGAKTAPP) show a composition bias toward low complexity. Over residues 529-543 (AAAASSGAAPAPAAA) the composition is skewed to low complexity. Acidic residues predominate over residues 544–553 (SEEEEEEDKE). Low complexity predominate over residues 564–577 (DPAAAAAAAGASSG). The segment covering 579-596 (ELTENERKWRELHARQQQ) has biased composition (basic and acidic residues). Low complexity-rich tracts occupy residues 604 to 617 (AAEA…AAAE) and 628 to 659 (VAQG…AAPT).

The protein belongs to the PIH1 family. Kintoun subfamily.

It is found in the cytoplasm. Functionally, required for cytoplasmic pre-assembly of axonemal dyneins, thereby playing a central role in motility in cilia and flagella. Involved in pre-assembly of dynein arm complexes in the cytoplasm before intraflagellar transport loads them for the ciliary compartment. This chain is Protein kintoun (pf13), found in Chlamydomonas reinhardtii (Chlamydomonas smithii).